A 174-amino-acid polypeptide reads, in one-letter code: uncharacterized protein (174 aa).

This sequence belongs to the archaeal NMN adenylyltransferase family.

This is an uncharacterized protein from Archaeoglobus fulgidus (strain ATCC 49558 / DSM 4304 / JCM 9628 / NBRC 100126 / VC-16).